The chain runs to 232 residues: tRNA (guanine-N(1)-)-methyltransferase (232 aa).

Residues Gly-112 and 132-137 (IGDYIL) contribute to the S-adenosyl-L-methionine site.

The protein belongs to the RNA methyltransferase TrmD family. In terms of assembly, homodimer.

The protein resides in the cytoplasm. It catalyses the reaction guanosine(37) in tRNA + S-adenosyl-L-methionine = N(1)-methylguanosine(37) in tRNA + S-adenosyl-L-homocysteine + H(+). Its function is as follows. Specifically methylates guanosine-37 in various tRNAs. This Methylacidiphilum infernorum (isolate V4) (Methylokorus infernorum (strain V4)) protein is tRNA (guanine-N(1)-)-methyltransferase.